Here is a 65-residue protein sequence, read N- to C-terminus: Small ribosomal subunit protein bS21 (65 aa).

Belongs to the bacterial ribosomal protein bS21 family.

This Cytophaga hutchinsonii (strain ATCC 33406 / DSM 1761 / CIP 103989 / NBRC 15051 / NCIMB 9469 / D465) protein is Small ribosomal subunit protein bS21.